The sequence spans 161 residues: 3-isopropylmalate dehydratase small subunit (161 aa).

The protein belongs to the LeuD family. LeuD type 2 subfamily. As to quaternary structure, heterodimer of LeuC and LeuD.

The catalysed reaction is (2R,3S)-3-isopropylmalate = (2S)-2-isopropylmalate. Its pathway is amino-acid biosynthesis; L-leucine biosynthesis; L-leucine from 3-methyl-2-oxobutanoate: step 2/4. Functionally, catalyzes the isomerization between 2-isopropylmalate and 3-isopropylmalate, via the formation of 2-isopropylmaleate. In Sulfolobus acidocaldarius (strain ATCC 33909 / DSM 639 / JCM 8929 / NBRC 15157 / NCIMB 11770), this protein is 3-isopropylmalate dehydratase small subunit.